The following is a 163-amino-acid chain: Photosystem II extrinsic protein V (163 aa).

Residues 1–26 form the signal peptide; the sequence is MFKKSYQFFALVLFSIFNVLVTSASA. Heme c-binding residues include Cys-63, Cys-66, His-67, and His-118.

The protein belongs to the cytochrome c family. PsbV subfamily. PSII is composed of 1 copy each of membrane proteins PsbA, PsbB, PsbC, PsbD, PsbE, PsbF, PsbH, PsbI, PsbJ, PsbK, PsbL, PsbM, PsbT, PsbY, PsbZ, Psb30/Ycf12, at least 3 peripheral proteins of the oxygen-evolving complex and a large number of cofactors. It forms dimeric complexes. The cofactor is heme c.

Its subcellular location is the plastid. The protein resides in the chloroplast thylakoid membrane. In terms of biological role, one of the extrinsic, lumenal subunits of photosystem II (PSII). PSII is a light-driven water plastoquinone oxidoreductase, using light energy to abstract electrons from H(2)O, generating a proton gradient subsequently used for ATP formation. The extrinsic proteins stabilize the structure of photosystem II oxygen-evolving complex (OEC), the ion environment of oxygen evolution and protect the OEC against heat-induced inactivation. In Trieres chinensis (Marine centric diatom), this protein is Photosystem II extrinsic protein V.